A 218-amino-acid polypeptide reads, in one-letter code: Thymidylate kinase (218 aa).

Residue 15–22 (GLDRSGKS) participates in ATP binding.

This sequence belongs to the thymidylate kinase family.

The catalysed reaction is dTMP + ATP = dTDP + ADP. The protein operates within pyrimidine metabolism; dTTP biosynthesis. In terms of biological role, catalyzes the conversion of dTMP to dTDP. The sequence is that of Thymidylate kinase from Caenorhabditis elegans.